The chain runs to 120 residues: Large ribosomal subunit protein uL18 (120 aa).

The protein belongs to the universal ribosomal protein uL18 family. As to quaternary structure, part of the 50S ribosomal subunit; part of the 5S rRNA/L5/L18/L25 subcomplex. Contacts the 5S and 23S rRNAs.

This is one of the proteins that bind and probably mediate the attachment of the 5S RNA into the large ribosomal subunit, where it forms part of the central protuberance. This chain is Large ribosomal subunit protein uL18, found in Beijerinckia indica subsp. indica (strain ATCC 9039 / DSM 1715 / NCIMB 8712).